Reading from the N-terminus, the 484-residue chain is Fumarate hydratase class II (484 aa).

Residues 1 to 22 (MPSILDLPIGTGATGKRKESDS) are disordered. Substrate is bound by residues 110–112 (SGT), 141–144 (HPND), 151–153 (SSN), and T199. H200 serves as the catalytic Proton donor/acceptor. S330 is an active-site residue. Substrate-binding positions include S331 and 336–338 (KVN).

This sequence belongs to the class-II fumarase/aspartase family. Fumarase subfamily. Homotetramer.

It localises to the cytoplasm. The enzyme catalyses (S)-malate = fumarate + H2O. The protein operates within carbohydrate metabolism; tricarboxylic acid cycle; (S)-malate from fumarate: step 1/1. In terms of biological role, involved in the TCA cycle. Catalyzes the stereospecific interconversion of fumarate to L-malate. The protein is Fumarate hydratase class II of Methanosarcina acetivorans (strain ATCC 35395 / DSM 2834 / JCM 12185 / C2A).